Reading from the N-terminus, the 86-residue chain is Small ribosomal subunit protein bS20 (86 aa).

The interval 1–22 is disordered; it reads MANIKSQIKRIRTNERRRLRNQ. Residues 7-20 show a composition bias toward basic residues; it reads QIKRIRTNERRRLR.

Belongs to the bacterial ribosomal protein bS20 family.

Its function is as follows. Binds directly to 16S ribosomal RNA. This Mycolicibacterium smegmatis (strain ATCC 700084 / mc(2)155) (Mycobacterium smegmatis) protein is Small ribosomal subunit protein bS20.